Reading from the N-terminus, the 385-residue chain is D-alanine--D-alanine ligase (385 aa).

The 211-residue stretch at 165 to 375 folds into the ATP-grasp domain; sequence KRVFTSFGLK…YPELVDRLVE (211 aa). An ATP-binding site is contributed by 201–256; that stretch reads AGEHGWPLFVKPARAGSSIGITKVDDLAGLDEAVAEAQRHDPKIIVEALLRGREIE. Asp329, Glu342, and Asn344 together coordinate Mg(2+).

The protein belongs to the D-alanine--D-alanine ligase family. Mg(2+) serves as cofactor. Requires Mn(2+) as cofactor.

The protein localises to the cytoplasm. The enzyme catalyses 2 D-alanine + ATP = D-alanyl-D-alanine + ADP + phosphate + H(+). It functions in the pathway cell wall biogenesis; peptidoglycan biosynthesis. Functionally, cell wall formation. In Streptomyces avermitilis (strain ATCC 31267 / DSM 46492 / JCM 5070 / NBRC 14893 / NCIMB 12804 / NRRL 8165 / MA-4680), this protein is D-alanine--D-alanine ligase.